The sequence spans 416 residues: Serine hydroxymethyltransferase (416 aa).

(6S)-5,6,7,8-tetrahydrofolate-binding positions include leucine 121 and 125-127; that span reads GHL. The residue at position 229 (lysine 229) is an N6-(pyridoxal phosphate)lysine. (6S)-5,6,7,8-tetrahydrofolate contacts are provided by residues glutamate 245 and 354 to 356; that span reads SPF.

Belongs to the SHMT family. In terms of assembly, homodimer. It depends on pyridoxal 5'-phosphate as a cofactor.

The protein resides in the cytoplasm. The catalysed reaction is (6R)-5,10-methylene-5,6,7,8-tetrahydrofolate + glycine + H2O = (6S)-5,6,7,8-tetrahydrofolate + L-serine. It participates in one-carbon metabolism; tetrahydrofolate interconversion. Its pathway is amino-acid biosynthesis; glycine biosynthesis; glycine from L-serine: step 1/1. Functionally, catalyzes the reversible interconversion of serine and glycine with tetrahydrofolate (THF) serving as the one-carbon carrier. This reaction serves as the major source of one-carbon groups required for the biosynthesis of purines, thymidylate, methionine, and other important biomolecules. Also exhibits THF-independent aldolase activity toward beta-hydroxyamino acids, producing glycine and aldehydes, via a retro-aldol mechanism. In Aliivibrio salmonicida (strain LFI1238) (Vibrio salmonicida (strain LFI1238)), this protein is Serine hydroxymethyltransferase.